The sequence spans 190 residues: dCTP deaminase (190 aa).

DCTP is bound by residues 111-116, 135-137, glutamine 156, tyrosine 172, and glutamine 182; these read KSTYAR and TLE. Glutamate 137 acts as the Proton donor/acceptor in catalysis.

The protein belongs to the dCTP deaminase family. In terms of assembly, homotrimer.

It carries out the reaction dCTP + H2O + H(+) = dUTP + NH4(+). It participates in pyrimidine metabolism; dUMP biosynthesis; dUMP from dCTP (dUTP route): step 1/2. Its function is as follows. Catalyzes the deamination of dCTP to dUTP. The chain is dCTP deaminase from Stenotrophomonas maltophilia (strain K279a).